We begin with the raw amino-acid sequence, 122 residues long: UPF0102 protein MUL_2060 (122 aa).

The protein belongs to the UPF0102 family.

The protein is UPF0102 protein MUL_2060 of Mycobacterium ulcerans (strain Agy99).